A 687-amino-acid chain; its full sequence is Dictomallein (687 aa).

Disordered regions lie at residues 1–45 and 73–112; these read MGNG…SRRL and TAGG…STSA. Positions 233 to 501 constitute a Peptidase M66 domain; it reads PVFGTDADVQ…QAWIASRVLA (269 aa). Zn(2+) is bound at residue His393. The active site involves Glu394. Residues His397 and His403 each coordinate Zn(2+).

It belongs to the dictomallein family. Zn(2+) serves as cofactor.

The chain is Dictomallein (dtmL) from Burkholderia pseudomallei (strain 668).